A 360-amino-acid polypeptide reads, in one-letter code: Dihydroorotate dehydrogenase (quinone) (360 aa).

FMN contacts are provided by residues 65-69 and Thr-89; that span reads AGLDK. Residue Lys-69 coordinates substrate. 114-118 serves as a coordination point for substrate; sequence NRLGF. 2 residues coordinate FMN: Asn-147 and Asn-180. Asn-180 lines the substrate pocket. Ser-183 serves as the catalytic Nucleophile. A substrate-binding site is contributed by Asn-185. 2 residues coordinate FMN: Lys-225 and Thr-253. Residue 254–255 participates in substrate binding; that stretch reads NT. FMN contacts are provided by residues Gly-276, Gly-305, and 326–327; that span reads YT.

The protein belongs to the dihydroorotate dehydrogenase family. Type 2 subfamily. As to quaternary structure, monomer. Requires FMN as cofactor.

It is found in the cell membrane. It carries out the reaction (S)-dihydroorotate + a quinone = orotate + a quinol. The protein operates within pyrimidine metabolism; UMP biosynthesis via de novo pathway; orotate from (S)-dihydroorotate (quinone route): step 1/1. Catalyzes the conversion of dihydroorotate to orotate with quinone as electron acceptor. In Verminephrobacter eiseniae (strain EF01-2), this protein is Dihydroorotate dehydrogenase (quinone).